Consider the following 850-residue polypeptide: Penicillin-binding protein 1A (850 aa).

The Cytoplasmic portion of the chain corresponds to 1–5 (MKFVK). A helical; Signal-anchor for type II membrane protein transmembrane segment spans residues 6 to 26 (YFLILAVCCILLGAGSIYGLY). Over 27 to 850 (RYIEPQLPDV…IDNGEAQELF (824 aa)) the chain is Periplasmic. The interval 48–216 (MQIYSADGEL…STFNPLYSMD (169 aa)) is transglycosylase. Glu86 acts as the Proton donor; for transglycosylase activity in catalysis. Positions 400–710 (DVLQTGQQIW…GWRAGRDLQR (311 aa)) are transpeptidase. Ser465 serves as the catalytic Acyl-ester intermediate; for transpeptidase activity.

It in the N-terminal section; belongs to the glycosyltransferase 51 family. In the C-terminal section; belongs to the transpeptidase family.

The protein localises to the cell inner membrane. It carries out the reaction [GlcNAc-(1-&gt;4)-Mur2Ac(oyl-L-Ala-gamma-D-Glu-L-Lys-D-Ala-D-Ala)](n)-di-trans,octa-cis-undecaprenyl diphosphate + beta-D-GlcNAc-(1-&gt;4)-Mur2Ac(oyl-L-Ala-gamma-D-Glu-L-Lys-D-Ala-D-Ala)-di-trans,octa-cis-undecaprenyl diphosphate = [GlcNAc-(1-&gt;4)-Mur2Ac(oyl-L-Ala-gamma-D-Glu-L-Lys-D-Ala-D-Ala)](n+1)-di-trans,octa-cis-undecaprenyl diphosphate + di-trans,octa-cis-undecaprenyl diphosphate + H(+). The catalysed reaction is Preferential cleavage: (Ac)2-L-Lys-D-Ala-|-D-Ala. Also transpeptidation of peptidyl-alanyl moieties that are N-acyl substituents of D-alanine.. Its pathway is cell wall biogenesis; peptidoglycan biosynthesis. Its function is as follows. Cell wall formation. Synthesis of cross-linked peptidoglycan from the lipid intermediates. The enzyme has a penicillin-insensitive transglycosylase N-terminal domain (formation of linear glycan strands) and a penicillin-sensitive transpeptidase C-terminal domain (cross-linking of the peptide subunits). The chain is Penicillin-binding protein 1A (mrcA) from Escherichia coli (strain K12).